A 542-amino-acid polypeptide reads, in one-letter code: Chaperonin GroEL 2 (542 aa).

ATP contacts are provided by residues 30–33, K51, 87–91, G415, and D496; these read TLGP and DGTTT.

The protein belongs to the chaperonin (HSP60) family. As to quaternary structure, forms a cylinder of 14 subunits composed of two heptameric rings stacked back-to-back. Interacts with the co-chaperonin GroES.

Its subcellular location is the cytoplasm. It carries out the reaction ATP + H2O + a folded polypeptide = ADP + phosphate + an unfolded polypeptide.. In terms of biological role, together with its co-chaperonin GroES, plays an essential role in assisting protein folding. The GroEL-GroES system forms a nano-cage that allows encapsulation of the non-native substrate proteins and provides a physical environment optimized to promote and accelerate protein folding. This is Chaperonin GroEL 2 from Rhizobium etli (strain ATCC 51251 / DSM 11541 / JCM 21823 / NBRC 15573 / CFN 42).